A 715-amino-acid polypeptide reads, in one-letter code: DNA ligase (715 aa).

NAD(+) is bound by residues 47-51, 96-97, and E128; these read DADYD and SL. K130 (N6-AMP-lysine intermediate) is an active-site residue. NAD(+) contacts are provided by R151, E188, K306, and K330. Positions 435, 438, 453, and 459 each coordinate Zn(2+). A BRCT domain is found at 637 to 715; it reads RRDTAVAGKT…EDEWLALIGN (79 aa).

This sequence belongs to the NAD-dependent DNA ligase family. LigA subfamily. Mg(2+) is required as a cofactor. Mn(2+) serves as cofactor.

The catalysed reaction is NAD(+) + (deoxyribonucleotide)n-3'-hydroxyl + 5'-phospho-(deoxyribonucleotide)m = (deoxyribonucleotide)n+m + AMP + beta-nicotinamide D-nucleotide.. Its function is as follows. DNA ligase that catalyzes the formation of phosphodiester linkages between 5'-phosphoryl and 3'-hydroxyl groups in double-stranded DNA using NAD as a coenzyme and as the energy source for the reaction. It is essential for DNA replication and repair of damaged DNA. This chain is DNA ligase, found in Rhodopseudomonas palustris (strain ATCC BAA-98 / CGA009).